A 356-amino-acid polypeptide reads, in one-letter code: UDP-N-acetylglucosamine--N-acetylmuramyl-(pentapeptide) pyrophosphoryl-undecaprenol N-acetylglucosamine transferase (356 aa).

UDP-N-acetyl-alpha-D-glucosamine contacts are provided by residues 12–14 (TGG), Asn124, Arg163, Ser188, Ile242, and Gln287.

The protein belongs to the glycosyltransferase 28 family. MurG subfamily.

It is found in the cell inner membrane. The catalysed reaction is di-trans,octa-cis-undecaprenyl diphospho-N-acetyl-alpha-D-muramoyl-L-alanyl-D-glutamyl-meso-2,6-diaminopimeloyl-D-alanyl-D-alanine + UDP-N-acetyl-alpha-D-glucosamine = di-trans,octa-cis-undecaprenyl diphospho-[N-acetyl-alpha-D-glucosaminyl-(1-&gt;4)]-N-acetyl-alpha-D-muramoyl-L-alanyl-D-glutamyl-meso-2,6-diaminopimeloyl-D-alanyl-D-alanine + UDP + H(+). Its pathway is cell wall biogenesis; peptidoglycan biosynthesis. In terms of biological role, cell wall formation. Catalyzes the transfer of a GlcNAc subunit on undecaprenyl-pyrophosphoryl-MurNAc-pentapeptide (lipid intermediate I) to form undecaprenyl-pyrophosphoryl-MurNAc-(pentapeptide)GlcNAc (lipid intermediate II). The protein is UDP-N-acetylglucosamine--N-acetylmuramyl-(pentapeptide) pyrophosphoryl-undecaprenol N-acetylglucosamine transferase of Pseudomonas savastanoi pv. phaseolicola (strain 1448A / Race 6) (Pseudomonas syringae pv. phaseolicola (strain 1448A / Race 6)).